A 386-amino-acid polypeptide reads, in one-letter code: MEELDALLEELERCTFQDSEEYSNPVSCHLDQQSTEESKIPQTPKTLSSQGNTSPLKVQLVYATNIQEPNVYSEVQEPKESVLPPKTSAAAQLDELMAHLSEMQAKVSVKADTSRKPLPDQQDHKASLDSMLGDLEQELQDLGIATVPKGYCASCQKPIAGKVIHALGQSWHPEHFVCTHCKEELGSSPFFERSGLAYCSKDYHRLFSPRCAYCAAPITDKVLTAMNKTWHPEHFFCSHCGEVFGAEGFHEKDKKPYCRKDFLAMFSPKCGGCNRPVLENYLSAMNTVWHPECFVCGDCFSSFSSGSFFELDGRPFCELHYHHRRGTLCHDCGQPITGRCISAMGHKFHPEHFVCAFCLTQLPKGIFKEQNNKTYCEKCFTKLFSQ.

An N-acetylmethionine modification is found at Met-1. Residues 3 to 15 carry the LD motif 1 motif; sequence ELDALLEELERCT. Ser-19 is subject to Phosphoserine. Residues 19 to 52 form a disordered region; that stretch reads SEEYSNPVSCHLDQQSTEESKIPQTPKTLSSQGN. The residue at position 22 (Tyr-22) is a Phosphotyrosine. A compositionally biased stretch (polar residues) spans 22–52; the sequence is YSNPVSCHLDQQSTEESKIPQTPKTLSSQGN. At Ser-54 the chain carries Phosphoserine. Position 62 is a phosphotyrosine (Tyr-62). 2 short sequence motifs (LD motif) span residues 70–82 and 92–103; these read NVYSEVQEPKESV and QLDELMAHLSEM. Tyr-72 carries the phosphotyrosine; by LYN modification. Ser-81 carries the post-translational modification Phosphoserine. LIM zinc-binding domains lie at 150–208, 209–267, 268–326, and 327–386; these read GYCA…RLFS, PRCA…AMFS, PKCG…HRRG, and TLCH…LFSQ.

Belongs to the paxillin family. Interacts with unphosphorylated ITGA4. Interacts with AR and SRF. Interacts with PTK2B/PYK2, PTPN22 and PTPN12. Interacts (via LD motif 3) with LYN and the interaction is induced upon B-cell antigen receptor (BCR) activation. Interacts (via LD motif 3) with PTK2/FAK. Phosphorylated on tyrosine residues. Phosphorylation on Tyr-72 is important for its inhibitory function. Bombesin stimulates phosphorylation on Tyr-22, Tyr-62 and Tyr-72. Expressed in osteoclasts (at protein level). Highly expressed in vascular smooth muscle.

Its subcellular location is the cytoplasm. The protein resides in the cell junction. The protein localises to the focal adhesion. It is found in the nucleus. It localises to the perinuclear region. Its subcellular location is the cell projection. The protein resides in the podosome. The protein localises to the cell membrane. Transcriptional coactivator for androgen receptor (AR) and serum response factor (SRF). Contributes to the regulation of cell adhesion, spreading and cell migration and acts as a negative regulator in integrin-mediated cell adhesion events. Suppresses the integrin-induced tyrosine phosphorylation of paxillin (PXN). May play a critical role as an adapter protein in the formation of the adhesion zone in osteoclasts. Negatively regulates B-cell antigen receptor (BCR) signaling. The protein is Leupaxin (Lpxn) of Mus musculus (Mouse).